Here is a 119-residue protein sequence, read N- to C-terminus: Class I hydrophobin 2 (119 aa).

Residues 1–22 (MFARISTIITTLFFAMLAAATA) form the signal peptide. Intrachain disulfides connect Cys36-Cys97, Cys45-Cys91, Cys46-Cys79, and Cys98-Cys112.

Belongs to the fungal hydrophobin family. In terms of assembly, self-assembles to form functional amyloid fibrils called rodlets. Self-assembly into fibrillar rodlets occurs spontaneously at hydrophobic:hydrophilic interfaces and the rodlets further associate laterally to form amphipathic monolayers.

The protein resides in the secreted. Its subcellular location is the cell wall. Aerial growth, conidiation, and dispersal of filamentous fungi in the environment rely upon a capability of their secreting small amphipathic proteins called hydrophobins (HPBs) with low sequence identity. Class I can self-assemble into an outermost layer of rodlet bundles on aerial cell surfaces, conferring cellular hydrophobicity that supports fungal growth, development and dispersal; whereas Class II form highly ordered films at water-air interfaces through intermolecular interactions but contribute nothing to the rodlet structure. Abh2 is a class I hydrophobin involved in the emergence of aerial hyphae and strands. This chain is Class I hydrophobin 2, found in Agaricus bisporus (White button mushroom).